The sequence spans 235 residues: BPI fold-containing family A member 2 (235 aa).

Positions 1-20 (MFQLGSLVVLCGLLIGTSES) are cleaved as a signal peptide. An intrachain disulfide couples Cys161 to Cys204.

It belongs to the BPI/LBP/Plunc superfamily. Plunc family. As to expression, expressed in parotid, submandibular and sublingual glands.

The protein resides in the secreted. In terms of biological role, has strong antibacterial activity against P.aeruginosa. The polypeptide is BPI fold-containing family A member 2 (Bpifa2) (Rattus norvegicus (Rat)).